Consider the following 344-residue polypeptide: Phosphate acyltransferase (344 aa).

Belongs to the PlsX family. As to quaternary structure, homodimer. Probably interacts with PlsY.

Its subcellular location is the cytoplasm. It carries out the reaction a fatty acyl-[ACP] + phosphate = an acyl phosphate + holo-[ACP]. The protein operates within lipid metabolism; phospholipid metabolism. In terms of biological role, catalyzes the reversible formation of acyl-phosphate (acyl-PO(4)) from acyl-[acyl-carrier-protein] (acyl-ACP). This enzyme utilizes acyl-ACP as fatty acyl donor, but not acyl-CoA. The polypeptide is Phosphate acyltransferase (Thermosynechococcus vestitus (strain NIES-2133 / IAM M-273 / BP-1)).